A 399-amino-acid chain; its full sequence is Elongation factor Tu (399 aa).

Residues 10 to 204 (KPHVNIGTIG…AVDASIPEPE (195 aa)) form the tr-type G domain. The tract at residues 19-26 (GHVDHGKT) is G1. A GTP-binding site is contributed by 19–26 (GHVDHGKT). Thr-26 is a binding site for Mg(2+). Positions 60 to 64 (GITIN) are G2. Residues 81–84 (DCPG) are G3. Residues 81–85 (DCPGH) and 136–139 (NKCD) contribute to the GTP site. The G4 stretch occupies residues 136-139 (NKCD). The tract at residues 174–176 (SGL) is G5.

Belongs to the TRAFAC class translation factor GTPase superfamily. Classic translation factor GTPase family. EF-Tu/EF-1A subfamily. As to quaternary structure, monomer.

Its subcellular location is the cytoplasm. It catalyses the reaction GTP + H2O = GDP + phosphate + H(+). GTP hydrolase that promotes the GTP-dependent binding of aminoacyl-tRNA to the A-site of ribosomes during protein biosynthesis. The sequence is that of Elongation factor Tu from Prochlorococcus marinus (strain MIT 9313).